A 205-amino-acid chain; its full sequence is MAKIKDEWGEFLVRLARRAIEEYLKTGKEIEPPKDTPKELWEKMGVFVTLNRHNVPPQTALRGCIGFPLPIYPLVKATIKAAIYSAVDDPRFPPVKLEEMDNIIVEVSVLTPPELIEGPPEERPKKIKVGRDGLIVEKGIYSGLLLPQVPIEWGWDEEEFLAETCWKAGLPPDCWLDEDTKVYRFTAEIFEEEYPRGPVRRKSLV.

The AMMECR1 domain occupies 7 to 201; that stretch reads EWGEFLVRLA…EEYPRGPVRR (195 aa).

The chain is Protein PYRAB00100 from Pyrococcus abyssi (strain GE5 / Orsay).